Here is a 661-residue protein sequence, read N- to C-terminus: Ecdysteroid-phosphate phosphatase (661 aa).

The UBA domain occupies 16 to 57; sequence KQDVSPLQILLQMGFRRQRALKALAATGNRSVQLASDWLLTH. One can recognise an SH3 domain in the interval 235-300; it reads ANHQVYKVTQ…PAVYTRRTAE (66 aa). Arg409 is a catalytic residue. His410 serves as the catalytic Tele-phosphohistidine intermediate. Residue His590 is part of the active site.

In terms of assembly, homodimer. Detected in non-diapause eggs, with highest expression between 2 and 5 days after oviposition. Not detected in other tissues tested.

Its subcellular location is the cytoplasm. It is found in the cytosol. It catalyses the reaction ecdysone 22-phosphate + H2O = ecdysone + phosphate. The enzyme catalyses 20-hydroxyecdysone 22-phosphate + H2O = 20-hydroxyecdysone + phosphate. It carries out the reaction 2-deoxyecdysone 22-phosphate + H2O = 2-deoxyecdysone + phosphate. The catalysed reaction is O-phospho-L-tyrosyl-[protein] + H2O = L-tyrosyl-[protein] + phosphate. Its activity is regulated as follows. Competitively inhibited by 4-nitrophenyl phosphate (para-nitrophenylphosphate, pNPP). Also inhibited by tungstate, vanadate, and phosphate. Its function is as follows. Steroid phosphatase which catalyzes the conversion of inactive phosphorylated ecdysteroids into their active forms. Shows high activity towards ecdysone 22-phosphate (E22P). Has lower activity towards other ecdysteriod phosphates including 20-hydroxyecdysone 22-phosphate (20E22P) and 2-deoxyecdysone 22-phosphate (2dE22P). Also has protein tyrosine phosphatase activity. This Bombyx mori (Silk moth) protein is Ecdysteroid-phosphate phosphatase.